Here is a 407-residue protein sequence, read N- to C-terminus: WEB family protein At3g51720 (407 aa).

3 coiled-coil regions span residues K72–N99, S128–A217, and E247–E278.

This sequence belongs to the WEB family.

The chain is WEB family protein At3g51720 from Arabidopsis thaliana (Mouse-ear cress).